A 101-amino-acid polypeptide reads, in one-letter code: Chaperone modulatory protein CbpM (101 aa).

Belongs to the CbpM family.

Interacts with CbpA and inhibits both the DnaJ-like co-chaperone activity and the DNA binding activity of CbpA. Together with CbpA, modulates the activity of the DnaK chaperone system. Does not inhibit the co-chaperone activity of DnaJ. The protein is Chaperone modulatory protein CbpM of Salmonella agona (strain SL483).